A 208-amino-acid polypeptide reads, in one-letter code: Uracil phosphoribosyltransferase (208 aa).

Residues Arg-78, Arg-103, and 130–138 (DPMLATGGS) contribute to the 5-phospho-alpha-D-ribose 1-diphosphate site. Uracil contacts are provided by residues Ile-193 and 198–200 (GDA). Asp-199 is a 5-phospho-alpha-D-ribose 1-diphosphate binding site.

This sequence belongs to the UPRTase family. Mg(2+) is required as a cofactor.

It carries out the reaction UMP + diphosphate = 5-phospho-alpha-D-ribose 1-diphosphate + uracil. Its pathway is pyrimidine metabolism; UMP biosynthesis via salvage pathway; UMP from uracil: step 1/1. Allosterically activated by GTP. In terms of biological role, catalyzes the conversion of uracil and 5-phospho-alpha-D-ribose 1-diphosphate (PRPP) to UMP and diphosphate. In Yersinia enterocolitica serotype O:8 / biotype 1B (strain NCTC 13174 / 8081), this protein is Uracil phosphoribosyltransferase.